Reading from the N-terminus, the 146-residue chain is MNPRRKKRLGLILALVLGASATVGLMLYALNQNMDLFYTPTELVNGKPDGTKPEVGQRLRIGGMVVVGSVKRDSQSLEVRFQVEDIGPKVTVIYDGILPDLFREGQGIVAQGVLVDATTVKAHEVLAKHDEEYMPPEVAEAMKKTH.

Topologically, residues Met-1 to Arg-8 are cytoplasmic. Residues Leu-9–Ala-29 form a helical; Signal-anchor for type II membrane protein membrane-spanning segment. Over Leu-30–His-146 the chain is Periplasmic. Heme is bound by residues His-129 and Tyr-133.

Belongs to the CcmE/CycJ family.

It localises to the cell inner membrane. Its function is as follows. Heme chaperone required for the biogenesis of c-type cytochromes. Transiently binds heme delivered by CcmC and transfers the heme to apo-cytochromes in a process facilitated by CcmF and CcmH. The polypeptide is Cytochrome c-type biogenesis protein CcmE (Aliivibrio salmonicida (strain LFI1238) (Vibrio salmonicida (strain LFI1238))).